We begin with the raw amino-acid sequence, 968 residues long: AP2-associated protein kinase 1 (968 aa).

M1 carries the post-translational modification N-acetylmethionine. Positions 1-11 (MKKFFDSRREQ) are enriched in basic and acidic residues. Residues 1-25 (MKKFFDSRREQGGSGLGSGSSGGGG) are disordered. Residues 12 to 25 (GGSGLGSGSSGGGG) are compositionally biased toward gly residues. S14 carries the post-translational modification Phosphoserine. One can recognise a Protein kinase domain in the interval 46 to 315 (VTVDEVLAEG…QVSFFSFKLL (270 aa)). Residues 52–60 (LAEGGFAIV) and K74 each bind ATP. D176 acts as the Proton acceptor in catalysis. Y234 carries the post-translational modification Phosphotyrosine. S235 bears the Phosphoserine mark. Disordered regions lie at residues 327–485 (SPIP…AQAP) and 578–640 (IQPP…AGHR). A phosphothreonine mark is found at T354 and T389. R391 carries the omega-N-methylarginine modification. Residues 437-448 (QAPPAPQQPPSA) show a composition bias toward pro residues. Composition is skewed to low complexity over residues 449-472 (PAQGLPAQAQATPQHQQQLFLKQQ) and 578-589 (IQPPQAQPATAS). T613 is modified (phosphothreonine). The residue at position 625 (S625) is a Phosphoserine. T627 carries the phosphothreonine modification. 4 positions are modified to phosphoserine: S630, S631, S644, and S657. T660 is subject to Phosphothreonine. A disordered region spans residues 671–708 (SLNKSKSATTTPSGSPRASQQNVYNPSEGSTWNPFDDD). The segment covering 679-703 (TTTPSGSPRASQQNVYNPSEGSTWN) has biased composition (polar residues). Y694 is modified (phosphotyrosine). 4 positions are modified to phosphoserine: S738, S853, S944, and S945. Residues 830–967 (EKADVAVESL…SLLLVDQLID (138 aa)) form a clathrin-binding domain (CBD) region. Disordered regions lie at residues 843–862 (LEPPVPQRLPSQTESVASNR) and 929–952 (PVLITKNPQGGHSRNSSGSSESSL). A compositionally biased stretch (polar residues) spans 851-862 (LPSQTESVASNR). Low complexity predominate over residues 938 to 951 (GGHSRNSSGSSESS).

It belongs to the protein kinase superfamily. Ser/Thr protein kinase family. In terms of assembly, interacts (via CBD domain) with clathrin. Interacts with AP-2 complex. Interacts with NUMB. Interacts with alpha-adaptin. Interacts with EPS15. Interacts with membrane-bound activated NOTCH1 but not with the inactive full-length form of NOTCH1. Preferentially interacts with monoubiquitinated activated NOTCH1 compared to the non-ubiquitinated form. In terms of processing, autophosphorylated.

The protein resides in the cell membrane. It is found in the membrane. It localises to the clathrin-coated pit. Its subcellular location is the presynapse. The enzyme catalyses L-seryl-[protein] + ATP = O-phospho-L-seryl-[protein] + ADP + H(+). It carries out the reaction L-threonyl-[protein] + ATP = O-phospho-L-threonyl-[protein] + ADP + H(+). With respect to regulation, stimulated by clathrin. Its function is as follows. Regulates clathrin-mediated endocytosis by phosphorylating the AP2M1/mu2 subunit of the adaptor protein complex 2 (AP-2) which ensures high affinity binding of AP-2 to cargo membrane proteins during the initial stages of endocytosis. Preferentially, may phosphorylate substrates on threonine residues. Regulates phosphorylation of other AP-2 subunits as well as AP-2 localization and AP-2-mediated internalization of ligand complexes. Phosphorylates NUMB and regulates its cellular localization, promoting NUMB localization to endosomes. Binds to and stabilizes the activated form of NOTCH1, increases its localization in endosomes and regulates its transcriptional activity. The protein is AP2-associated protein kinase 1 (AAK1) of Sus scrofa (Pig).